Consider the following 358-residue polypeptide: Peptide chain release factor 1 (358 aa).

Glutamine 233 is subject to N5-methylglutamine. The disordered stretch occupies residues 286–309 (AELASARKSQVGTGDRSERIRTYN).

The protein belongs to the prokaryotic/mitochondrial release factor family. Methylated by PrmC. Methylation increases the termination efficiency of RF1.

It localises to the cytoplasm. Peptide chain release factor 1 directs the termination of translation in response to the peptide chain termination codons UAG and UAA. The protein is Peptide chain release factor 1 of Carboxydothermus hydrogenoformans (strain ATCC BAA-161 / DSM 6008 / Z-2901).